We begin with the raw amino-acid sequence, 61 residues long: MKKLKITLVKSPIGYKYDQKDTVKRLGLRKLNSTVIKEDVPQVRGMIRKVRHLVKVEEIEE.

It belongs to the universal ribosomal protein uL30 family. In terms of assembly, part of the 50S ribosomal subunit.

This chain is Large ribosomal subunit protein uL30, found in Thermosipho melanesiensis (strain DSM 12029 / CIP 104789 / BI429).